Here is a 349-residue protein sequence, read N- to C-terminus: 5,10-methylenetetrahydromethanopterin reductase (349 aa).

It belongs to the mer family. In terms of assembly, homotetramer composed of two loosely associated dimers.

It is found in the cytoplasm. It carries out the reaction 5-methyl-5,6,7,8-tetrahydromethanopterin + oxidized coenzyme F420-(gamma-L-Glu)(n) + H(+) = 5,10-methylenetetrahydromethanopterin + reduced coenzyme F420-(gamma-L-Glu)(n). Its pathway is one-carbon metabolism; methanogenesis from CO(2); methyl-coenzyme M from 5,10-methylene-5,6,7,8-tetrahydromethanopterin: step 1/2. With respect to regulation, requires the presence of relatively high concentrations of either sulfate or phosphate for maximal activity. In terms of biological role, catalyzes the reversible reduction of methylene-H(4)MPT to methyl-H(4)MPT. The polypeptide is 5,10-methylenetetrahydromethanopterin reductase (Methanopyrus kandleri (strain AV19 / DSM 6324 / JCM 9639 / NBRC 100938)).